Consider the following 504-residue polypeptide: Cytochrome P450 6B6 (504 aa).

Heme is bound at residue cysteine 445.

The protein belongs to the cytochrome P450 family. The cofactor is heme.

The protein resides in the endoplasmic reticulum membrane. Its subcellular location is the microsome membrane. It carries out the reaction an organic molecule + reduced [NADPH--hemoprotein reductase] + O2 = an alcohol + oxidized [NADPH--hemoprotein reductase] + H2O + H(+). The protein is Cytochrome P450 6B6 (CYP6B6) of Helicoverpa armigera (Cotton bollworm).